We begin with the raw amino-acid sequence, 633 residues long: Pesticidal crystal protein Cry2Ab (633 aa).

Belongs to the delta endotoxin family.

Its function is as follows. Promotes colloidosmotic lysis by binding to the midgut epithelial cells of lepidopteran (Manduca sexta) larvae. The protein is Pesticidal crystal protein Cry2Ab (cry2Ab) of Bacillus thuringiensis subsp. kurstaki.